The following is a 315-amino-acid chain: Ribosomal protein L11 methyltransferase (315 aa).

S-adenosyl-L-methionine contacts are provided by Thr162, Gly183, Asp205, and Asn248.

This sequence belongs to the methyltransferase superfamily. PrmA family.

It is found in the cytoplasm. The enzyme catalyses L-lysyl-[protein] + 3 S-adenosyl-L-methionine = N(6),N(6),N(6)-trimethyl-L-lysyl-[protein] + 3 S-adenosyl-L-homocysteine + 3 H(+). In terms of biological role, methylates ribosomal protein L11. This chain is Ribosomal protein L11 methyltransferase, found in Oceanobacillus iheyensis (strain DSM 14371 / CIP 107618 / JCM 11309 / KCTC 3954 / HTE831).